A 540-amino-acid polypeptide reads, in one-letter code: Synaptotagmin-3 (540 aa).

Residues 9 to 29 (GIIGFVIGIPIGLILGFFVLI) traverse the membrane as a helical segment. Residues 67 to 249 (DYERVDWFNK…WPQVLEIPIL (183 aa)) form the SMP-LTD domain. The segment at 227–509 (QETIKRQVSS…ELGHVDINLD (283 aa)) is phospholipid binding. C2 domains follow at residues 240–363 (WPQV…EFNL) and 401–521 (RKES…NQKY). The Ca(2+) site is built by D277, D283, D333, D335, and D341.

This sequence belongs to the synaptotagmin family. Ca(2+) is required as a cofactor.

It is found in the membrane. Functionally, may be involved in membrane trafficking. The polypeptide is Synaptotagmin-3 (SYT3) (Arabidopsis thaliana (Mouse-ear cress)).